A 131-amino-acid polypeptide reads, in one-letter code: Snaclec bitiscetin subunit alpha (131 aa).

Cystine bridges form between Cys4–Cys15, Cys32–Cys125, and Cys100–Cys117. The C-type lectin domain maps to 11 to 126 (YKGHCYKVFK…CGEKNPFICK (116 aa)).

Belongs to the snaclec family. Heterodimer of subunits alpha and beta; disulfide-linked. As to expression, expressed by the venom gland.

It is found in the secreted. Snaclec that binds to von Willebrand factor (VWF) and induces its interaction with GPIbalpha (GP1BA) (via the vWF A1 domain), resulting in platelet aggregation. The protein is Snaclec bitiscetin subunit alpha of Bitis arietans (African puff adder).